Consider the following 465-residue polypeptide: 5-cytosine rRNA methyltransferase nsun-4 (465 aa).

Residues 1–6 (MSCLRQ) constitute a mitochondrion transit peptide. Positions 106-130 (QAIETKRKSVEEKANRETQKVKHEI) are enriched in basic and acidic residues. A disordered region spans residues 106-145 (QAIETKRKSVEEKANRETQKVKHEISNPSTSTNTEDSEPD). Residues 260–266 (CAAPGGK), D283, D316, and D335 contribute to the S-adenosyl-L-methionine site. The active-site Nucleophile is the C390.

Belongs to the class I-like SAM-binding methyltransferase superfamily. RsmB/NOP family.

The protein localises to the mitochondrion. It carries out the reaction a cytidine in rRNA + S-adenosyl-L-methionine = a 5-methylcytidine in rRNA + S-adenosyl-L-homocysteine + H(+). It catalyses the reaction a cytidine in tRNA + S-adenosyl-L-methionine = a 5-methylcytidine in tRNA + S-adenosyl-L-homocysteine + H(+). Its function is as follows. Mitochondrial methyltransferase which methylates cytosine to 5-methylcytosine (m5C) in rRNAs and tRNAs at multiple sites. May play a role in the translation of leucine and proline codons. The sequence is that of 5-cytosine rRNA methyltransferase nsun-4 from Caenorhabditis elegans.